Here is a 31-residue protein sequence, read N- to C-terminus: Glucagon-3 (31 aa).

It belongs to the glucagon family.

Its subcellular location is the secreted. Functionally, glucagon plays a key role in glucose metabolism and homeostasis. Regulates blood glucose by increasing gluconeogenesis and decreasing glycolysis. The polypeptide is Glucagon-3 (Huso dauricus (Kaluga sturgeon)).